The following is a 151-amino-acid chain: SsrA-binding protein (151 aa).

A disordered region spans residues 132 to 151; sequence KRQTIKKRDQDREIHRKYGI.

Belongs to the SmpB family.

Its subcellular location is the cytoplasm. Functionally, required for rescue of stalled ribosomes mediated by trans-translation. Binds to transfer-messenger RNA (tmRNA), required for stable association of tmRNA with ribosomes. tmRNA and SmpB together mimic tRNA shape, replacing the anticodon stem-loop with SmpB. tmRNA is encoded by the ssrA gene; the 2 termini fold to resemble tRNA(Ala) and it encodes a 'tag peptide', a short internal open reading frame. During trans-translation Ala-aminoacylated tmRNA acts like a tRNA, entering the A-site of stalled ribosomes, displacing the stalled mRNA. The ribosome then switches to translate the ORF on the tmRNA; the nascent peptide is terminated with the 'tag peptide' encoded by the tmRNA and targeted for degradation. The ribosome is freed to recommence translation, which seems to be the essential function of trans-translation. This chain is SsrA-binding protein, found in Lactobacillus johnsonii (strain CNCM I-12250 / La1 / NCC 533).